A 1230-amino-acid chain; its full sequence is Ubiquitin carboxyl-terminal hydrolase 15 (1230 aa).

The 141-residue stretch at Glu-39–Val-179 folds into the MATH domain. One can recognise a USP domain in the interval Val-205–Gln-536. The Nucleophile role is filled by Cys-214. Residue His-465 is the Proton acceptor of the active site.

It belongs to the peptidase C19 family. Interacts with PEX6; promoting association with the PEX1-PEX6 ATPase complex.

It is found in the cytoplasm. The protein resides in the cytosol. It localises to the peroxisome. It carries out the reaction Thiol-dependent hydrolysis of ester, thioester, amide, peptide and isopeptide bonds formed by the C-terminal Gly of ubiquitin (a 76-residue protein attached to proteins as an intracellular targeting signal).. Functionally, deubiquitinase involved in peroxisome import by mediating deubiquitination of the peroxisomal import receptor PEX5. Catalyzes deubiquitination of both monoubiquitiated and polyubiquitinated forms of PEX5 following its retrotranslocation into the cytosol, resetting PEX5 for a subsequent import cycle. This chain is Ubiquitin carboxyl-terminal hydrolase 15, found in Saccharomyces cerevisiae (strain ATCC 204508 / S288c) (Baker's yeast).